We begin with the raw amino-acid sequence, 183 residues long: ARS-binding factor 2, mitochondrial (183 aa).

Residues 1–26 (MNSYSLLTRSFHESSKPLFNLASTLL) constitute a mitochondrion transit peptide. 2 DNA-binding regions (HMG box) span residues 43-111 (PKRP…KEFD) and 116-183 (PKKP…YPLN).

Its subcellular location is the mitochondrion. It localises to the nucleus. Its function is as follows. Specific binding to the autonomously replicating sequence 1 (ARS1). Interaction with regulatory regions: probably involved in compacting the mitochondrial genome. It might play a positive role in gene expression and replication. In Saccharomyces cerevisiae (strain ATCC 204508 / S288c) (Baker's yeast), this protein is ARS-binding factor 2, mitochondrial (ABF2).